We begin with the raw amino-acid sequence, 300 residues long: tRNA dimethylallyltransferase (300 aa).

Gly11–Ser18 lines the ATP pocket. Position 13–18 (Thr13–Ser18) interacts with substrate. The tract at residues Asp35 to Gln38 is interaction with substrate tRNA.

Belongs to the IPP transferase family. In terms of assembly, monomer. The cofactor is Mg(2+).

It carries out the reaction adenosine(37) in tRNA + dimethylallyl diphosphate = N(6)-dimethylallyladenosine(37) in tRNA + diphosphate. Functionally, catalyzes the transfer of a dimethylallyl group onto the adenine at position 37 in tRNAs that read codons beginning with uridine, leading to the formation of N6-(dimethylallyl)adenosine (i(6)A). The chain is tRNA dimethylallyltransferase from Borrelia recurrentis (strain A1).